Reading from the N-terminus, the 273-residue chain is Putative pyruvate, phosphate dikinase regulatory protein (273 aa).

Glycine 151–threonine 158 serves as a coordination point for ADP.

The protein belongs to the pyruvate, phosphate/water dikinase regulatory protein family. PDRP subfamily.

It carries out the reaction N(tele)-phospho-L-histidyl/L-threonyl-[pyruvate, phosphate dikinase] + ADP = N(tele)-phospho-L-histidyl/O-phospho-L-threonyl-[pyruvate, phosphate dikinase] + AMP + H(+). The catalysed reaction is N(tele)-phospho-L-histidyl/O-phospho-L-threonyl-[pyruvate, phosphate dikinase] + phosphate + H(+) = N(tele)-phospho-L-histidyl/L-threonyl-[pyruvate, phosphate dikinase] + diphosphate. Its function is as follows. Bifunctional serine/threonine kinase and phosphorylase involved in the regulation of the pyruvate, phosphate dikinase (PPDK) by catalyzing its phosphorylation/dephosphorylation. This Desulfitobacterium hafniense (strain DSM 10664 / DCB-2) protein is Putative pyruvate, phosphate dikinase regulatory protein.